A 258-amino-acid polypeptide reads, in one-letter code: Hydroxyethylthiazole kinase (258 aa).

Met37 contributes to the substrate binding site. Arg112 and Thr158 together coordinate ATP. Residue Ala185 coordinates substrate.

Belongs to the Thz kinase family. Requires Mg(2+) as cofactor.

It carries out the reaction 5-(2-hydroxyethyl)-4-methylthiazole + ATP = 4-methyl-5-(2-phosphooxyethyl)-thiazole + ADP + H(+). It participates in cofactor biosynthesis; thiamine diphosphate biosynthesis; 4-methyl-5-(2-phosphoethyl)-thiazole from 5-(2-hydroxyethyl)-4-methylthiazole: step 1/1. Functionally, catalyzes the phosphorylation of the hydroxyl group of 4-methyl-5-beta-hydroxyethylthiazole (THZ). The polypeptide is Hydroxyethylthiazole kinase (Rhizobium etli (strain CIAT 652)).